The following is a 456-amino-acid chain: ATP synthase subunit beta 1 (456 aa).

152–159 (GGAGVGKS) serves as a coordination point for ATP.

The protein belongs to the ATPase alpha/beta chains family. F-type ATPases have 2 components, CF(1) - the catalytic core - and CF(0) - the membrane proton channel. CF(1) has five subunits: alpha(3), beta(3), gamma(1), delta(1), epsilon(1). CF(0) has three main subunits: a(1), b(2) and c(9-12). The alpha and beta chains form an alternating ring which encloses part of the gamma chain. CF(1) is attached to CF(0) by a central stalk formed by the gamma and epsilon chains, while a peripheral stalk is formed by the delta and b chains.

It is found in the cell membrane. It catalyses the reaction ATP + H2O + 4 H(+)(in) = ADP + phosphate + 5 H(+)(out). Produces ATP from ADP in the presence of a proton gradient across the membrane. The catalytic sites are hosted primarily by the beta subunits. The chain is ATP synthase subunit beta 1 from Listeria welshimeri serovar 6b (strain ATCC 35897 / DSM 20650 / CCUG 15529 / CIP 8149 / NCTC 11857 / SLCC 5334 / V8).